Reading from the N-terminus, the 210-residue chain is Thymidylate kinase (210 aa).

ATP is bound at residue 11–18 (GLEGAGKS).

This sequence belongs to the thymidylate kinase family.

The enzyme catalyses dTMP + ATP = dTDP + ADP. Phosphorylation of dTMP to form dTDP in both de novo and salvage pathways of dTTP synthesis. The polypeptide is Thymidylate kinase (Histophilus somni (strain 129Pt) (Haemophilus somnus)).